We begin with the raw amino-acid sequence, 226 residues long: DELTA-thalatoxin-Avl1b (226 aa).

The N-terminal stretch at 1-21 is a signal peptide; it reads MRHFVVFLYMFLALSIPTAFA. A propeptide spanning residues 22 to 45 is cleaved from the precursor; the sequence is KKHIVTKKGNHQDITNDNEGENAE. Residues 50–59 are plays an important role in the hemolytic activity; the sequence is AVAGAVIAGG. The N-terminal region stretch occupies residues 58–77; it reads GGELALKILTKILDEIGKID. Phosphocholine contacts are provided by serine 101, valine 134, serine 152, proline 154, tyrosine 180, and tyrosine 184. The tract at residues 152 to 167 is trp-rich region, which is important for the binding to lipid membrane; it reads SVPFDYNLYTNWWNVK. Residues 191–193 carry the Cell attachment site, crucial for protein stability motif; the sequence is KPS.

It belongs to the actinoporin family. Sea anemone subfamily. In terms of assembly, octamer or nonamer in membranes. Monomer in the soluble state.

It is found in the secreted. The protein localises to the nematocyst. Its subcellular location is the target cell membrane. Functionally, pore-forming protein that forms cations-selective hydrophilic pores of around 1 nm and causes cytolysis. Pore formation is a multi-step process that involves specific recognition of membrane sphingomyelin (but neither cholesterol nor phosphatidylcholine) using aromatic rich region and adjacent phosphocholine (POC) binding site, firm binding to the membrane (mainly driven by hydrophobic interactions) accompanied by the transfer of the N-terminal region to the lipid-water interface and finally pore formation after oligomerization of monomers. This is DELTA-thalatoxin-Avl1b from Actineria villosa (Okinawan sea anemone).